A 111-amino-acid chain; its full sequence is Large ribosomal subunit protein uL22 (111 aa).

This sequence belongs to the universal ribosomal protein uL22 family. Part of the 50S ribosomal subunit.

In terms of biological role, this protein binds specifically to 23S rRNA; its binding is stimulated by other ribosomal proteins, e.g. L4, L17, and L20. It is important during the early stages of 50S assembly. It makes multiple contacts with different domains of the 23S rRNA in the assembled 50S subunit and ribosome. The globular domain of the protein is located near the polypeptide exit tunnel on the outside of the subunit, while an extended beta-hairpin is found that lines the wall of the exit tunnel in the center of the 70S ribosome. The sequence is that of Large ribosomal subunit protein uL22 from Geotalea daltonii (strain DSM 22248 / JCM 15807 / FRC-32) (Geobacter daltonii).